Reading from the N-terminus, the 353-residue chain is A-kinase anchor protein 7 isoforms delta and gamma (353 aa).

2 stretches are compositionally biased toward basic and acidic residues: residues 1–22 (MERP…RGEE) and 66–76 (RSKENRGDRND). Disordered regions lie at residues 1–33 (MERP…SPVG) and 47–85 (DDCG…KKAK). Residues Thr-134 and 224-226 (HLT) contribute to the AMP site. CMP is bound by residues Thr-134 and 224 to 226 (HLT). The interval 299 to 353 (AELVRLSKRLVENAVLKAVQQYLEETQNKKQPGEGNSVKAEEGDRNGDGSDNNRK) is PKA-RII-alpha subunit binding domain. Residues 300–324 (ELVRLSKRLVENAVLKAVQQYLEET) are RI-alpha-binding. The RII-binding stretch occupies residues 301–314 (LVRLSKRLVENAVL). The tract at residues 321–353 (LEETQNKKQPGEGNSVKAEEGDRNGDGSDNNRK) is disordered. Residues 337–353 (KAEEGDRNGDGSDNNRK) show a composition bias toward basic and acidic residues.

Binds cAMP-dependent protein kinase (PKA). Interacts with PRKCA; only the cytoplasmic form is capable of interacting with PRKCA. In terms of tissue distribution, expressed highly in the heart, and moderately in brain, lung, liver, kidney and testis. Hardly detectable in spleen and skeletal muscle. In kidney, isoform Delta is expressed in the principal cells of the IMCD.

It is found in the nucleus. Its subcellular location is the cytoplasm. The protein localises to the cell membrane. Probably targets cAMP-dependent protein kinase (PKA) to the cellular membrane or cytoskeletal structures. The membrane-associated form reduces epithelial sodium channel (ENaC) activity, whereas the free cytoplasmic form may negatively regulate ENaC channel feedback inhibition by intracellular sodium. Isoform Delta may be involved in shuttling aquaporin-2 (AQP2) to the plasma membrane. The sequence is that of A-kinase anchor protein 7 isoforms delta and gamma from Rattus norvegicus (Rat).